The primary structure comprises 55 residues: Large ribosomal subunit protein bL33C (55 aa).

This sequence belongs to the bacterial ribosomal protein bL33 family.

The chain is Large ribosomal subunit protein bL33C from Kineococcus radiotolerans (strain ATCC BAA-149 / DSM 14245 / SRS30216).